The following is a 184-amino-acid chain: Mediator of RNA polymerase II transcription subunit 28 (184 aa).

Residues 77-105 adopt a coiled-coil conformation; sequence LLKEENFDLKQEIARKDELIRKHYEKIES.

This sequence belongs to the Mediator complex subunit 28 family. In terms of assembly, component of the Mediator complex.

It is found in the nucleus. Its function is as follows. Component of the Mediator complex, a coactivator involved in the regulated transcription of nearly all RNA polymerase II-dependent genes. Mediator functions as a bridge to convey information from gene-specific regulatory proteins to the basal RNA polymerase II transcription machinery. Mediator is recruited to promoters by direct interactions with regulatory proteins and serves as a scaffold for the assembly of a functional preinitiation complex with RNA polymerase II and the general transcription factors. The chain is Mediator of RNA polymerase II transcription subunit 28 (MED28) from Aedes aegypti (Yellowfever mosquito).